The primary structure comprises 86 residues: Insulin (86 aa).

3 disulfides stabilise this stretch: C7/C72, C19/C85, and C71/C76. Residues 33–63 constitute a propeptide, c peptide; sequence ELEDPQVGQADPGVVPEAGRLQPLALEMTLQ.

This sequence belongs to the insulin family. As to quaternary structure, heterodimer of a B chain and an A chain linked by two disulfide bonds.

It is found in the secreted. Insulin decreases blood glucose concentration. It increases cell permeability to monosaccharides, amino acids and fatty acids. It accelerates glycolysis, the pentose phosphate cycle, and glycogen synthesis in liver. This Chinchilla chinchilla (Short-tailed chinchilla) protein is Insulin (INS).